The sequence spans 156 residues: Small ribosomal subunit protein uS7 (156 aa).

The protein belongs to the universal ribosomal protein uS7 family. As to quaternary structure, part of the 30S ribosomal subunit. Contacts proteins S9 and S11.

In terms of biological role, one of the primary rRNA binding proteins, it binds directly to 16S rRNA where it nucleates assembly of the head domain of the 30S subunit. Is located at the subunit interface close to the decoding center, probably blocks exit of the E-site tRNA. This is Small ribosomal subunit protein uS7 from Trichlorobacter lovleyi (strain ATCC BAA-1151 / DSM 17278 / SZ) (Geobacter lovleyi).